The primary structure comprises 200 residues: Probable nicotinate-nucleotide adenylyltransferase (200 aa).

This sequence belongs to the NadD family.

It catalyses the reaction nicotinate beta-D-ribonucleotide + ATP + H(+) = deamido-NAD(+) + diphosphate. Its pathway is cofactor biosynthesis; NAD(+) biosynthesis; deamido-NAD(+) from nicotinate D-ribonucleotide: step 1/1. Functionally, catalyzes the reversible adenylation of nicotinate mononucleotide (NaMN) to nicotinic acid adenine dinucleotide (NaAD). The polypeptide is Probable nicotinate-nucleotide adenylyltransferase (Lachnoclostridium phytofermentans (strain ATCC 700394 / DSM 18823 / ISDg) (Clostridium phytofermentans)).